Here is a 602-residue protein sequence, read N- to C-terminus: Transcription factor COE4 (602 aa).

Residues 64–67 form an interaction with DNA region; the sequence is RKSN. Residues 152–171 form a C5-type zinc finger; that stretch reads CRVLLTHEIMCSRCCDRKSC. Interaction with DNA regions lie at residues 198 to 205 and 237 to 240; these read NCLKNAGN and NNSK. One can recognise an IPT/TIG domain in the interval 256 to 338; that stretch reads PCIKAISPGE…CKGCPGRFVY (83 aa). Disordered regions lie at residues 448–476 and 558–602; these read PEPGYARSCSSASPRGFAPSPGSQQSGYG and PVLR…LAYS. Residues 560-569 show a composition bias toward pro residues; sequence LRPPSSPPQA.

Belongs to the COE family. In terms of assembly, forms either a homodimer or a heterodimer with a related family member. Interacts with MAPK3/ERK1. Interacts with STAT5A. Most highly expressed in cytotoxic NK cells, especially CD16(+) NK cells, followed by CD8(+) T-cells.

It is found in the nucleus. Transcription factor. Binds to specific sequence motif 5'-CCCNNG[GA]G-3' in regulatory elements of putative target immunoregulatory genes such as NKG7, GZMA, and TBX21. Positively modulates transcription of NKG7. May play a role in regulating FAS/CD95-mediated apoptosis in cytotoxic NK cells and T-cells, probably downstream of interleukin IL2 signaling. This chain is Transcription factor COE4 (EBF4), found in Homo sapiens (Human).